We begin with the raw amino-acid sequence, 257 residues long: Type III pantothenate kinase (257 aa).

5 to 12 (DIGNTNIK) contacts ATP. 107 to 110 (GSDR) is a binding site for substrate. Asp109 acts as the Proton acceptor in catalysis. Thr133 provides a ligand contact to ATP.

Belongs to the type III pantothenate kinase family. As to quaternary structure, homodimer. The cofactor is NH4(+). K(+) serves as cofactor.

The protein resides in the cytoplasm. The catalysed reaction is (R)-pantothenate + ATP = (R)-4'-phosphopantothenate + ADP + H(+). Its pathway is cofactor biosynthesis; coenzyme A biosynthesis; CoA from (R)-pantothenate: step 1/5. Its function is as follows. Catalyzes the phosphorylation of pantothenate (Pan), the first step in CoA biosynthesis. In Ehrlichia ruminantium (strain Welgevonden), this protein is Type III pantothenate kinase.